We begin with the raw amino-acid sequence, 173 residues long: Photosystem I assembly protein Ycf3 (173 aa).

TPR repeat units lie at residues 35–68, 72–105, and 120–153; these read AFAYYRDGMSAQGDGEYAEALENYQEALRLEEDP, AFILYNMALVYASNGEHNRALEQYEQALALNAKM, and GSIAQEKGESDEADRRFDLAADFWSKAIRLAPNN.

It belongs to the Ycf3 family.

The protein localises to the cellular thylakoid membrane. Its function is as follows. Essential for the assembly of the photosystem I (PSI) complex. May act as a chaperone-like factor to guide the assembly of the PSI subunits. The protein is Photosystem I assembly protein Ycf3 of Synechococcus sp. (strain RCC307).